The chain runs to 189 residues: Coatomer subunit zeta (189 aa).

This sequence belongs to the adaptor complexes small subunit family. As to quaternary structure, oligomeric complex that consists of at least the alpha, beta, beta', gamma, delta, epsilon and zeta subunits.

It is found in the cytoplasm. The protein resides in the golgi apparatus membrane. The protein localises to the cytoplasmic vesicle. Its subcellular location is the COPI-coated vesicle membrane. In terms of biological role, the coatomer is a cytosolic protein complex that binds to dilysine motifs and reversibly associates with Golgi non-clathrin-coated vesicles, which further mediate biosynthetic protein transport from the ER, via the Golgi up to the trans Golgi network. Coatomer complex is required for budding from Golgi membranes, and is essential for the retrograde Golgi-to-ER transport of dilysine-tagged proteins. The zeta subunit may be involved in regulating the coat assembly and, hence, the rate of biosynthetic protein transport due to its association-dissociation properties with the coatomer complex. This Saccharomyces cerevisiae (strain ATCC 204508 / S288c) (Baker's yeast) protein is Coatomer subunit zeta (RET3).